Consider the following 425-residue polypeptide: Adenylosuccinate synthetase (425 aa).

GTP is bound by residues 12-18 and 40-42; these read GDEGKGK and GHT. D13 serves as the catalytic Proton acceptor. The Mg(2+) site is built by D13 and G40. IMP is bound by residues 13-16, 38-41, T130, R144, Q225, T240, and R304; these read DEGK and NAGH. Residue H41 is the Proton donor of the active site. Substrate is bound at residue 300–306; the sequence is ATTGRPR. GTP contacts are provided by residues R306, 332 to 334, and 414 to 416; these read KLD and SVG.

It belongs to the adenylosuccinate synthetase family. Homodimer. Requires Mg(2+) as cofactor.

The protein resides in the cytoplasm. It catalyses the reaction IMP + L-aspartate + GTP = N(6)-(1,2-dicarboxyethyl)-AMP + GDP + phosphate + 2 H(+). It functions in the pathway purine metabolism; AMP biosynthesis via de novo pathway; AMP from IMP: step 1/2. Functionally, plays an important role in the de novo pathway of purine nucleotide biosynthesis. Catalyzes the first committed step in the biosynthesis of AMP from IMP. The sequence is that of Adenylosuccinate synthetase from Desulfovibrio desulfuricans (strain ATCC 27774 / DSM 6949 / MB).